Consider the following 496-residue polypeptide: Probable cytosol aminopeptidase (496 aa).

Mn(2+) is bound by residues K258 and D263. K270 is an active-site residue. The Mn(2+) site is built by D281, D340, and E342. Residue R344 is part of the active site.

Belongs to the peptidase M17 family. The cofactor is Mn(2+).

The protein resides in the cytoplasm. The catalysed reaction is Release of an N-terminal amino acid, Xaa-|-Yaa-, in which Xaa is preferably Leu, but may be other amino acids including Pro although not Arg or Lys, and Yaa may be Pro. Amino acid amides and methyl esters are also readily hydrolyzed, but rates on arylamides are exceedingly low.. It carries out the reaction Release of an N-terminal amino acid, preferentially leucine, but not glutamic or aspartic acids.. In terms of biological role, presumably involved in the processing and regular turnover of intracellular proteins. Catalyzes the removal of unsubstituted N-terminal amino acids from various peptides. This Helicobacter pylori (strain Shi470) protein is Probable cytosol aminopeptidase.